Consider the following 61-residue polypeptide: Metallothionein-2B (61 aa).

N-acetylmethionine is present on Met-1. The tract at residues Met-1 to Cys-29 is beta. A divalent metal cation contacts are provided by Cys-5, Cys-7, Cys-13, Cys-15, Cys-19, Cys-21, Cys-24, Cys-26, Cys-29, Cys-33, Cys-34, Cys-36, Cys-37, Cys-41, Cys-44, Cys-48, Cys-50, Cys-57, Cys-59, and Cys-60. The segment at Lys-30 to Ala-61 is alpha.

The protein belongs to the metallothionein superfamily. Type 1 family. As to quaternary structure, monomer.

Functionally, metallothioneins have a high content of cysteine residues that bind various heavy metals; these proteins are transcriptionally regulated by both heavy metals and glucocorticoids. This Sus scrofa (Pig) protein is Metallothionein-2B (MT2B).